The sequence spans 188 residues: ATP synthase subunit b 2 (188 aa).

A disordered region spans residues 1–23; the sequence is MAEGHGDANGATAHTAADGGHKA. The span at 8-18 shows a compositional bias: low complexity; that stretch reads ANGATAHTAAD. The chain crosses the membrane as a helical span at residues 37-57; that stretch reads LVSLLIAFVALYLIVSKIALP.

The protein belongs to the ATPase B chain family. F-type ATPases have 2 components, F(1) - the catalytic core - and F(0) - the membrane proton channel. F(1) has five subunits: alpha(3), beta(3), gamma(1), delta(1), epsilon(1). F(0) has three main subunits: a(1), b(2) and c(10-14). The alpha and beta chains form an alternating ring which encloses part of the gamma chain. F(1) is attached to F(0) by a central stalk formed by the gamma and epsilon chains, while a peripheral stalk is formed by the delta and b chains.

It is found in the cell inner membrane. F(1)F(0) ATP synthase produces ATP from ADP in the presence of a proton or sodium gradient. F-type ATPases consist of two structural domains, F(1) containing the extramembraneous catalytic core and F(0) containing the membrane proton channel, linked together by a central stalk and a peripheral stalk. During catalysis, ATP synthesis in the catalytic domain of F(1) is coupled via a rotary mechanism of the central stalk subunits to proton translocation. In terms of biological role, component of the F(0) channel, it forms part of the peripheral stalk, linking F(1) to F(0). The b'-subunit is a diverged and duplicated form of b found in plants and photosynthetic bacteria. This Rhodopseudomonas palustris (strain BisB18) protein is ATP synthase subunit b 2 (atpF2).